A 247-amino-acid polypeptide reads, in one-letter code: Synaptogyrin homolog 1 (247 aa).

The 155-residue stretch at 21–175 (FFKKPTVLFR…AAFFAWRRYE (155 aa)) folds into the MARVEL domain. 4 helical membrane-spanning segments follow: residues 25–45 (PTVL…YSVS), 69–89 (CSFA…LIVL), 105–125 (AVLA…IGFF), and 151–171 (FGIL…FFAW). A disordered region spans residues 206–247 (DSTGIGHVGAPPPQSSYQSGAAPQTMQQPPSNPYTQSEGYGY). Over residues 220 to 247 (SSYQSGAAPQTMQQPPSNPYTQSEGYGY) the composition is skewed to polar residues.

It belongs to the synaptogyrin family. Expressed in a wide variety of neurons and is expressed weakly in the non-neuronal distal tip cells. A punctate pattern was observed in the ventral and dorsal nerve cords and the nerve ring. Weak expression is seen in neuronal cell bodies and commissures.

The protein resides in the membrane. In Caenorhabditis elegans, this protein is Synaptogyrin homolog 1 (sng-1).